Here is a 397-residue protein sequence, read N- to C-terminus: Elongation factor Tu (397 aa).

The tr-type G domain maps to Lys-10–Gln-207. Positions Gly-19–Thr-26 are G1. Gly-19–Thr-26 is a binding site for GTP. Mg(2+) is bound at residue Thr-26. Residues Gly-60–Ala-64 are G2. Residues Asp-81 to Gly-84 form a G3 region. GTP contacts are provided by residues Asp-81–His-85 and Asn-136–Asp-139. The segment at Asn-136–Asp-139 is G4. The tract at residues Ser-174–Leu-176 is G5.

It belongs to the TRAFAC class translation factor GTPase superfamily. Classic translation factor GTPase family. EF-Tu/EF-1A subfamily. As to quaternary structure, monomer.

The protein resides in the cytoplasm. It catalyses the reaction GTP + H2O = GDP + phosphate + H(+). Its function is as follows. GTP hydrolase that promotes the GTP-dependent binding of aminoacyl-tRNA to the A-site of ribosomes during protein biosynthesis. The protein is Elongation factor Tu of Lawsonia intracellularis (strain PHE/MN1-00).